Reading from the N-terminus, the 421-residue chain is Acetylglutamate kinase (421 aa).

The interval 1 to 252 (MASAKEISQY…PLESSVSITR (252 aa)) is acetylglutamate kinase. Substrate is bound by residues 59-60 (AG), Arg-81, and Asn-170. An N-acetyltransferase domain is found at 274-420 (ERVIRATTWK…HCTQHPPTLI (147 aa)).

In the N-terminal section; belongs to the acetylglutamate kinase family. ArgB subfamily.

Its subcellular location is the cytoplasm. The catalysed reaction is N-acetyl-L-glutamate + ATP = N-acetyl-L-glutamyl 5-phosphate + ADP. It participates in amino-acid biosynthesis; L-arginine biosynthesis; N(2)-acetyl-L-ornithine from L-glutamate: step 2/4. The polypeptide is Acetylglutamate kinase (argB) (Xylella fastidiosa (strain Temecula1 / ATCC 700964)).